Here is a 401-residue protein sequence, read N- to C-terminus: Probable cysteine desulfurase (401 aa).

N6-(pyridoxal phosphate)lysine is present on K216.

Belongs to the class-V pyridoxal-phosphate-dependent aminotransferase family. Csd subfamily. It depends on pyridoxal 5'-phosphate as a cofactor.

It catalyses the reaction (sulfur carrier)-H + L-cysteine = (sulfur carrier)-SH + L-alanine. In Pyrococcus abyssi (strain GE5 / Orsay), this protein is Probable cysteine desulfurase (csd).